The sequence spans 312 residues: Structure-specific endonuclease subunit SLX1 (312 aa).

In terms of domain architecture, GIY-YIG spans 9–92 (DFYGCYLLQS…QHGYQTRYIK (84 aa)). The SLX1-type zinc finger occupies 219-282 (CQFCNKIIKH…IPQSPKCPKC (64 aa)).

This sequence belongs to the SLX1 family. Forms a heterodimer with SLX4. Requires a divalent metal cation as cofactor.

The protein resides in the nucleus. Its function is as follows. Catalytic subunit of the SLX1-SLX4 structure-specific endonuclease that resolves DNA secondary structures generated during DNA repair and recombination. Has endonuclease activity towards branched DNA substrates, introducing single-strand cuts in duplex DNA close to junctions with ss-DNA. This is Structure-specific endonuclease subunit SLX1 from Candida glabrata (strain ATCC 2001 / BCRC 20586 / JCM 3761 / NBRC 0622 / NRRL Y-65 / CBS 138) (Yeast).